Here is a 697-residue protein sequence, read N- to C-terminus: MTTKAQSYLTHFRNIGIAAHIDAGKTTTTERILYYTGRTHNIGEVHDGAATMDWMEQERERGITITAAATTAKWKRSGTDQEYVVNIIDTPGHVDFTIEVERSMRVLDGAVAVFDSSQGVEPQSETVWRQADRYGVPRIAFSNKMDKTGASFELVLTDIKERLGAIPAPIQYPMGQENDFKGIIDIVRMRAHVYTNDLGTDIVESDIPAEFADKVAEMRAQLIEAAAEVDEDLMMMYLEGEEPSVEQLVSAIRKGTIEKKIFPVLCGSALKNKGVQLLLDAVVDYLPSPLEVPAIRGKVEDSEDTVEFPADPEGKLAALAFKIMADPYVGRLTFVRIYSGTLQSGSYVYNASKDKRDRVGRLLKMHANSREEVTELRAGELGAVIGLKDAGTGNTLIADGEDRVLLESIDVPEPVIKLAIEPKTKADQEKMGIGLQKLAEEDPTFRVESDQESGQTTISGMGELHLEILVDRLKREYKVEANVGAPQVAYRETITKAVDVEGKFVRQSGGRGQFGHVKIKAEPLEPGAGFVFENIVVGGTVPREFIGPAQKGIEEALQSGPMLGFPVVDMKVSLYDGSYHEVDSSEMAFKIAGSMALKEAVQKGAPAILEPIMRVEVTVPEDYMGDIIGDLNSRRGQIQGMEARGNAQIVKAFVPLSEMFGYATDMRSMTQGRASYSMFFDHYSQVPNNLAQQLMKK.

The tr-type G domain occupies 10–290 (THFRNIGIAA…AVVDYLPSPL (281 aa)). Residues 19–26 (AHIDAGKT), 89–93 (DTPGH), and 143–146 (NKMD) contribute to the GTP site.

It belongs to the TRAFAC class translation factor GTPase superfamily. Classic translation factor GTPase family. EF-G/EF-2 subfamily.

It localises to the cytoplasm. In terms of biological role, catalyzes the GTP-dependent ribosomal translocation step during translation elongation. During this step, the ribosome changes from the pre-translocational (PRE) to the post-translocational (POST) state as the newly formed A-site-bound peptidyl-tRNA and P-site-bound deacylated tRNA move to the P and E sites, respectively. Catalyzes the coordinated movement of the two tRNA molecules, the mRNA and conformational changes in the ribosome. The sequence is that of Elongation factor G from Deinococcus deserti (strain DSM 17065 / CIP 109153 / LMG 22923 / VCD115).